The sequence spans 274 residues: Putative HTH-type transcriptional regulator RmpR (274 aa).

Residues 18 to 88 (IERADAIVER…RSGGTFVVNQ (71 aa)) form the HTH gntR-type domain. Positions 46 to 65 (EAALSEMFGVGGATLREALS) form a DNA-binding region, H-T-H motif. Over residues 250 to 265 (SRPSSPATAPDGSSSA) the composition is skewed to polar residues. The interval 250–274 (SRPSSPATAPDGSSSAEAAMIQEGQ) is disordered.

Functionally, may regulate the transcription of the rmpAB operon. The chain is Putative HTH-type transcriptional regulator RmpR (rmpR) from Mycobacterium gastri.